The following is an 83-amino-acid chain: Small ribosomal subunit protein bS18A (83 aa).

Belongs to the bacterial ribosomal protein bS18 family. Part of the 30S ribosomal subunit. Forms a tight heterodimer with protein bS6.

Its function is as follows. Binds as a heterodimer with protein bS6 to the central domain of the 16S rRNA, where it helps stabilize the platform of the 30S subunit. This is Small ribosomal subunit protein bS18A from Mycolicibacterium vanbaalenii (strain DSM 7251 / JCM 13017 / BCRC 16820 / KCTC 9966 / NRRL B-24157 / PYR-1) (Mycobacterium vanbaalenii).